The primary structure comprises 1358 residues: Phosphoinositide 3-kinase regulatory subunit 4 (1358 aa).

Gly-2 is lipidated: N-myristoyl glycine. The Protein kinase domain maps to 26–324 (FEYDKSLGST…AFPEVFYTFL (299 aa)). Residues 32–40 (LGSTRFFKV) and Lys-53 contribute to the ATP site. Asp-148 acts as the Proton acceptor in catalysis. HEAT repeat units lie at residues 413-450 (ILLD…LVQE), 458-495 (IYPE…TALR), 572-610 (KAND…YVGW), and 612-648 (SSSI…LGLL). Phosphoserine is present on residues Ser-808, Ser-813, Ser-853, and Ser-865. The disordered stretch occupies residues 875 to 899 (LPKTSDHEVVPTGKSPRSESSAGVC). WD repeat units follow at residues 991 to 1030 (EHKS…GKTT), 1040 to 1079 (RIGG…LPKS), 1093 to 1134 (KEDG…NAWT), 1139 to 1178 (LKSG…PISS), 1182 to 1223 (PSRA…RRLT), and 1237 to 1278 (PSPH…RSYV). The disordered stretch occupies residues 1307–1326 (KQKVGPSDDTPRRGPESLPV). Over residues 1315 to 1326 (DTPRRGPESLPV) the composition is skewed to basic and acidic residues. Thr-1316 carries the phosphothreonine modification. One copy of the WD 7 repeat lies at 1327–1358 (GHHDIITDIATFQTTQGFIVTASRDGIVKVWK).

Belongs to the protein kinase superfamily. Ser/Thr protein kinase family. In terms of assembly, component of the PI3K (PI3KC3/PI3K-III/class III phosphatidylinositol 3-kinase) complex the core of which is composed of the catalytic subunit PIK3C3, the regulatory subunit PIK3R4 and BECN1 associating with additional regulatory/auxiliary subunits to form alternative complex forms. Alternative complex forms containing a fourth regulatory subunit in a mutually exclusive manner are PI3K complex I (PI3KC3-C1) containing ATG14, and PI3K complex II (PI3KC3-C2) containing UVRAG. PI3KC3-C1 displays a V-shaped architecture with PIK3R4 serving as a bridge between PIK3C3 and the ATG14:BECN1 subcomplex. Both, PI3KC3-C1 and PI3KC3-C2, can associate with further regulatory subunits, such as RUBCN, SH3GLB1/Bif-1, AMBRA1 and NRBF2. PI3KC3-C1 probably associates with PIK3CB. Interacts with RAB7A in the presence of PIK3C3/VPS34. Interacts with NRBF2. Interacts with ARMC3. Mn(2+) serves as cofactor. Myristoylated. Post-translationally, probably autophosphorylated.

The protein resides in the late endosome. It localises to the cytoplasmic vesicle. Its subcellular location is the autophagosome. The protein localises to the membrane. It carries out the reaction L-seryl-[protein] + ATP = O-phospho-L-seryl-[protein] + ADP + H(+). The enzyme catalyses L-threonyl-[protein] + ATP = O-phospho-L-threonyl-[protein] + ADP + H(+). Functionally, regulatory subunit of the PI3K complex that mediates formation of phosphatidylinositol 3-phosphate; different complex forms are believed to play a role in multiple membrane trafficking pathways: PI3KC3-C1 is involved in initiation of autophagosomes and PI3KC3-C2 in maturation of autophagosomes and endocytosis. Involved in regulation of degradative endocytic trafficking and cytokinesis, probably in the context of PI3KC3-C2. In Rattus norvegicus (Rat), this protein is Phosphoinositide 3-kinase regulatory subunit 4 (Pik3r4).